The primary structure comprises 244 residues: Venom nerve growth factor (244 aa).

The N-terminal stretch at Met-1 to Ala-18 is a signal peptide. A propeptide spanning residues Ala-19 to Arg-125 is cleaved from the precursor. Disulfide bonds link Cys-139/Cys-204, Cys-182/Cys-232, and Cys-192/Cys-234. An N-linked (GlcNAc...) asparagine glycan is attached at Asn-148.

The protein belongs to the NGF-beta family. Homodimer; non-covalently linked. Post-translationally, N-glycosylated. In terms of tissue distribution, expressed by the venom gland.

The protein resides in the secreted. Functionally, nerve growth factor is important for the development and maintenance of the sympathetic and sensory nervous systems. It stimulates division and differentiation of sympathetic and embryonic sensory neurons as well as basal forebrain cholinergic neurons in the brain. Its relevance in the snake venom is not clear. However, it has been shown to inhibit metalloproteinase-dependent proteolysis of platelet glycoprotein Ib alpha, suggesting a metalloproteinase inhibition to prevent metalloprotease autodigestion and/or protection against prey proteases. Binds a lipid between the two protein chains in the homodimer. The lipid-bound form promotes histamine relase from mouse mast cells, contrary to the lipid-free form. It promotes neurite outgrowth in rat PC12 pheochromocytoma cells. In Macrovipera lebetinus (Levantine viper), this protein is Venom nerve growth factor.